A 464-amino-acid chain; its full sequence is MPANDFVSPDSIRAQFSAAMSLMYKQEVPLYGTLLELVSEINQQVMAQQPEVAEALRWTGEIERLDQERHGAIRVGTAEELATIARLFAVMGMQPVGYYDLSSAGVPVHSTAFRAVHEQSLHVSPFRVFTSLLRLELIDNPQLRELAQSILAKRQIFTSRALELIAQCEREGGLDAADAETFVQEALHTFRWHQDATVTAEQYQQLHDQHRLIADVVAFKGPHINHLTPRTLDIDAIQLGMPAKGIPPKAVVEGPPTRRHPILLRQTSFKALQETVAFRDQQGREGSHTARFGEIEQRGAALTPKGRQLYDKLLDATRVALGGAPAEANAERYMALLQANFAEFPDDLAQMREQGLAYFRYFATEKGLAARDQEGRPTTLQGLIDAGHVHFEALVYEDFLPVSAAGIFQSNLGDDAQAEYGSNANREAFEAALGLQVQDELALYAQSERRSLQACAQALNLGSM.

3 residues coordinate 2-oxoadipate: histidine 70, arginine 74, and histidine 226. Fe(2+) is bound at residue histidine 70. Histidine 226 and glutamate 294 together coordinate Fe(2+). Residue valine 402 coordinates 2-oxoadipate.

This sequence belongs to the 2-oxoadipate dioxygenase/decarboxylase family. It depends on Fe(2+) as a cofactor.

The catalysed reaction is 2-oxoadipate + O2 = (R)-2-hydroxyglutarate + CO2. It functions in the pathway amino-acid degradation. With respect to regulation, inhibited by EDTA. Its function is as follows. Catalyzes the decarboxylation and hydroxylation of 2-oxoadipate (2OA) to form D-2-hydroxyglutarate (D-2-HGA). Is specific for 2-oxoadipate. Is involved in a D-lysine catabolic pathway. This is 2-oxoadipate dioxygenase/decarboxylase from Pseudomonas putida (strain ATCC 47054 / DSM 6125 / CFBP 8728 / NCIMB 11950 / KT2440).